A 635-amino-acid chain; its full sequence is ADP-ribosylation factor-binding protein GGA1 (635 aa).

Methionine 1 carries the post-translational modification N-acetylmethionine. Residues 17–147 (ATNPLNKELN…MLKKQGIVKS (131 aa)) enclose the VHS domain. The interval 114 to 273 (KILELLYSWT…RLASDTEDND (160 aa)) is interaction with ARF3. The GAT domain maps to 171–298 (DEEKSKMLAR…VINLYKQLVR (128 aa)). Serine 185 is subject to Phosphoserine. The segment at 299–505 (GEEVNGDATA…ITVPLESIKP (207 aa)) is unstructured hinge. A disordered region spans residues 305-349 (DATASSIPGSTSALLDLSGLDLPPPGTTQPATPTRPGNQSSPEQL). Positions 313 to 325 (GSTSALLDLSGLD) are enriched in low complexity. Phosphoserine is present on serine 354. Positions 357 to 361 (DDELM) match the Autoinhibitory motif. Disordered stretches follow at residues 362–422 (SLGL…LDDL) and 455–490 (RDLQ…TPTE). Residues 383 to 393 (NFQSSDGTESS) show a composition bias toward polar residues. Serine 417 is modified (phosphoserine). Over residues 459–476 (SKSSSPSPGAASLLHTTS) the composition is skewed to low complexity. Pro residues predominate over residues 477-486 (PEPPGPPPQA). The region spanning 506-627 (SSILPVTVYD…NEMGDVDQFP (122 aa)) is the GAE domain.

This sequence belongs to the GGA protein family. As to quaternary structure, monomer. Interacts with GGA2 and GGA3. Binds to clathrin and activated ARFs, including ARF1, ARF5 and ARF6. Interacts with RABEP1 and RABGEF1. Interacts with the type-I membrane proteins LRP3, M6PR/CD-MPR and IGF2R/CI-MPR. Interacts (via N-terminal VHS domain) with SORL1/sorLA and SORT1 (via C-terminal cytosolic domain). Interacts with EPN4. Interacts with CCDC91. Interacts with HEATR5B/p200a. Interacts with SYNRG/gamma-synergin. Interacts (via GAE doamin) with NECAP1 and NECAP2. Interacts (via GAE domain) with AFTPH/aftiphilin. Interacts with TSG101 and UBC. Interacts with RNF11. Interacts (via VHS domain) with BACE1 (via DXXLL motif); the interaction highly increases when BACE1 is phosphorylated at 'Ser-498'. Interacts with CNST. Interacts with ADRA2B. Interacts with ARL3; the interaction recruits, in collaboration with RABEP1, PKD1:PKD2 complex to trans-Golgi network and is required for ciliary targeting. In terms of processing, phosphorylated by CK2 and dephosphorylated by PP2A. Phosphorylation of GGA1 allows the internal DXXLL motif to bind the VHS domain and to inhibit the recognition of cargo signals. Ubiquitinated.

The protein resides in the golgi apparatus. It is found in the trans-Golgi network membrane. It localises to the endosome membrane. The protein localises to the early endosome membrane. Plays a role in protein sorting and trafficking between the trans-Golgi network (TGN) and endosomes. Mediates the ARF-dependent recruitment of clathrin to the TGN and binds ubiquitinated proteins and membrane cargo molecules with a cytosolic acidic cluster-dileucine (DXXLL) motif. Mediates export of the GPCR receptor ADRA2B to the cell surface. Required for targeting PKD1:PKD2 complex from the trans-Golgi network to the cilium membrane. Regulates retrograde transport of proteins such as phosphorylated form of BACE1 from endosomes to the trans-Golgi network. The protein is ADP-ribosylation factor-binding protein GGA1 (Gga1) of Mus musculus (Mouse).